The sequence spans 147 residues: D-aminoacyl-tRNA deacylase (147 aa).

Residues 137–138 (GP) carry the Gly-cisPro motif, important for rejection of L-amino acids motif.

Belongs to the DTD family. As to quaternary structure, homodimer.

It localises to the cytoplasm. The catalysed reaction is glycyl-tRNA(Ala) + H2O = tRNA(Ala) + glycine + H(+). It carries out the reaction a D-aminoacyl-tRNA + H2O = a tRNA + a D-alpha-amino acid + H(+). Its function is as follows. An aminoacyl-tRNA editing enzyme that deacylates mischarged D-aminoacyl-tRNAs. Also deacylates mischarged glycyl-tRNA(Ala), protecting cells against glycine mischarging by AlaRS. Acts via tRNA-based rather than protein-based catalysis; rejects L-amino acids rather than detecting D-amino acids in the active site. By recycling D-aminoacyl-tRNA to D-amino acids and free tRNA molecules, this enzyme counteracts the toxicity associated with the formation of D-aminoacyl-tRNA entities in vivo and helps enforce protein L-homochirality. The polypeptide is D-aminoacyl-tRNA deacylase (Jannaschia sp. (strain CCS1)).